The primary structure comprises 226 residues: ATP synthase subunit a (226 aa).

Helical transmembrane passes span 18–38 (FITG…SLGA), 79–99 (LAGT…IPGF), 105–125 (SWSF…FEGI), 134–154 (FAHF…IEII), 179–199 (LIML…VLFF), and 201–221 (GILQ…GAVL).

This sequence belongs to the ATPase A chain family. In terms of assembly, F-type ATPases have 2 components, CF(1) - the catalytic core - and CF(0) - the membrane proton channel. CF(1) has five subunits: alpha(3), beta(3), gamma(1), delta(1), epsilon(1). CF(0) has three main subunits: a(1), b(2) and c(9-12). The alpha and beta chains form an alternating ring which encloses part of the gamma chain. CF(1) is attached to CF(0) by a central stalk formed by the gamma and epsilon chains, while a peripheral stalk is formed by the delta and b chains.

It is found in the cell inner membrane. Functionally, key component of the proton channel; it plays a direct role in the translocation of protons across the membrane. This chain is ATP synthase subunit a, found in Helicobacter pylori (strain J99 / ATCC 700824) (Campylobacter pylori J99).